A 184-amino-acid polypeptide reads, in one-letter code: Peptidyl-tRNA hydrolase (184 aa).

TRNA is bound at residue Tyr14. His19 functions as the Proton acceptor in the catalytic mechanism. TRNA contacts are provided by Phe64, Asn66, and Asn112.

It belongs to the PTH family. In terms of assembly, monomer.

It is found in the cytoplasm. It catalyses the reaction an N-acyl-L-alpha-aminoacyl-tRNA + H2O = an N-acyl-L-amino acid + a tRNA + H(+). Hydrolyzes ribosome-free peptidyl-tRNAs (with 1 or more amino acids incorporated), which drop off the ribosome during protein synthesis, or as a result of ribosome stalling. Its function is as follows. Catalyzes the release of premature peptidyl moieties from peptidyl-tRNA molecules trapped in stalled 50S ribosomal subunits, and thus maintains levels of free tRNAs and 50S ribosomes. This chain is Peptidyl-tRNA hydrolase, found in Thermoanaerobacter sp. (strain X514).